Here is a 501-residue protein sequence, read N- to C-terminus: Probable cytosol aminopeptidase (501 aa).

Mn(2+) is bound by residues lysine 268 and aspartate 273. Lysine 280 is a catalytic residue. Positions 291, 350, and 352 each coordinate Mn(2+). The active site involves arginine 354.

Belongs to the peptidase M17 family. Mn(2+) is required as a cofactor.

It localises to the cytoplasm. The enzyme catalyses Release of an N-terminal amino acid, Xaa-|-Yaa-, in which Xaa is preferably Leu, but may be other amino acids including Pro although not Arg or Lys, and Yaa may be Pro. Amino acid amides and methyl esters are also readily hydrolyzed, but rates on arylamides are exceedingly low.. It catalyses the reaction Release of an N-terminal amino acid, preferentially leucine, but not glutamic or aspartic acids.. Functionally, presumably involved in the processing and regular turnover of intracellular proteins. Catalyzes the removal of unsubstituted N-terminal amino acids from various peptides. This chain is Probable cytosol aminopeptidase, found in Colwellia psychrerythraea (strain 34H / ATCC BAA-681) (Vibrio psychroerythus).